A 317-amino-acid polypeptide reads, in one-letter code: High-affinity zinc uptake system protein ZnuA (317 aa).

The signal sequence occupies residues 1–31; that stretch reads MNINIMLKNKKKKFFSILAILFILMPNNSYA. C259 and C313 are joined by a disulfide.

The protein belongs to the bacterial solute-binding protein 9 family.

It is found in the periplasm. Part of the ATP-binding cassette (ABC) transport system ZnuABC involved in zinc import. Binds zinc with high affinity and specificity and delivers it to the membrane permease for translocation into the cytoplasm. The polypeptide is High-affinity zinc uptake system protein ZnuA (znuA) (Buchnera aphidicola subsp. Schizaphis graminum (strain Sg)).